The sequence spans 354 residues: Mating-type protein MAT-1 (354 aa).

Residues 60–117 (KAKKALNAFVGFRCYYIAIPAFKQWPMKKLSNLISLLWDRDPNKSLWSLMAKAWSNIR) constitute a DNA-binding region (alpha box).

The protein belongs to the MATALPHA1 family.

It localises to the nucleus. In terms of biological role, mating type proteins are sequence specific DNA-binding proteins that act as master switches in fungal differentiation by controlling gene expression in a cell type-specific fashion. Transcriptional activator that induces the transcription of alpha-specific genes. The polypeptide is Mating-type protein MAT-1 (MAT1) (Cochliobolus cymbopogonis (Curvularia cymbopogonis)).